A 429-amino-acid polypeptide reads, in one-letter code: Transcriptional coactivator AacuS (429 aa).

An HTH iclR-type domain is found at 80–144 (MASQTQLLAC…GFLQEPELGH (65 aa)). Positions 110–129 (IKDVAELIGVPENHICRIVR) form a DNA-binding region, H-T-H motif.

It localises to the nucleus. Functionally, transcriptional coactivator; part of the gene cluster that mediates the biosynthesis of the tetrahydroxanthone dimer secalonic acid D. The chain is Transcriptional coactivator AacuS from Aspergillus aculeatus (strain ATCC 16872 / CBS 172.66 / WB 5094).